The primary structure comprises 330 residues: Probable cytosolic iron-sulfur protein assembly protein ciao1 (330 aa).

WD repeat units lie at residues 14–53, 59–98, 103–142, 148–187, 192–231, 244–283, and 295–330; these read HPDS…WECK, GHQR…FECL, GHEN…EYEC, SHTQ…WECR, GHES…DGSS, FHGR…DPEQ, and AHNQ…YNSA.

Belongs to the WD repeat CIA1 family. As to quaternary structure, component of the CIA complex.

Functionally, key component of the cytosolic iron-sulfur protein assembly (CIA) complex, a multiprotein complex that mediates the incorporation of iron-sulfur cluster into extramitochondrial Fe/S proteins. The protein is Probable cytosolic iron-sulfur protein assembly protein ciao1 (ciao1) of Danio rerio (Zebrafish).